Here is a 276-residue protein sequence, read N- to C-terminus: UPF0276 protein PA4106 (276 aa).

Belongs to the UPF0276 family.

This chain is UPF0276 protein PA4106, found in Pseudomonas aeruginosa (strain ATCC 15692 / DSM 22644 / CIP 104116 / JCM 14847 / LMG 12228 / 1C / PRS 101 / PAO1).